The sequence spans 464 residues: Probable 1,4-beta-D-glucan cellobiohydrolase C (464 aa).

Residues 1 to 19 (MKNFAPSLALSLLLPTVQA) form the signal peptide. Residues 20–55 (QQTMWGQCGGAGWSGATDCVAGGVCSTQNAYYAQCL) form the CBM1 domain. 2 disulfide bridges follow: Cys27-Cys44 and Cys38-Cys54. The tract at residues 59–102 (TTATTLSTTSKGTTTTTTSSTTSTGGGSSSTTTKTSTSAGPTVT) is thr-rich linker. A compositionally biased stretch (low complexity) spans 65–100 (STTSKGTTTTTTSSTTSTGGGSSSTTTKTSTSAGPT). The disordered stretch occupies residues 65–108 (STTSKGTTTTTTSSTTSTGGGSSSTTTKTSTSAGPTVTGSPSGN). The tract at residues 103–464 (GSPSGNPFSG…QLLTNANPAF (362 aa)) is catalytic. Asp194 is an active-site residue. Disulfide bonds link Cys195/Cys254 and Cys386/Cys433. Asp240 serves as the catalytic Proton donor. Asp419 serves as the catalytic Nucleophile.

Belongs to the glycosyl hydrolase 6 (cellulase B) family.

The protein resides in the secreted. It catalyses the reaction Hydrolysis of (1-&gt;4)-beta-D-glucosidic linkages in cellulose and cellotetraose, releasing cellobiose from the non-reducing ends of the chains.. The biological conversion of cellulose to glucose generally requires three types of hydrolytic enzymes: (1) Endoglucanases which cut internal beta-1,4-glucosidic bonds; (2) Exocellobiohydrolases that cut the disaccharide cellobiose from the non-reducing end of the cellulose polymer chain; (3) Beta-1,4-glucosidases which hydrolyze the cellobiose and other short cello-oligosaccharides to glucose. This Aspergillus clavatus (strain ATCC 1007 / CBS 513.65 / DSM 816 / NCTC 3887 / NRRL 1 / QM 1276 / 107) protein is Probable 1,4-beta-D-glucan cellobiohydrolase C (cbhC).